Consider the following 279-residue polypeptide: Shikimate dehydrogenase (NADP(+)) (279 aa).

Shikimate is bound by residues Ser19–Ser21 and Thr66. The active-site Proton acceptor is Lys70. The shikimate site is built by Asn91 and Asp106. NADP(+) is bound by residues Gly129 to Ala133 and Phe222. Tyr224 is a shikimate binding site. Gly243 serves as a coordination point for NADP(+).

The protein belongs to the shikimate dehydrogenase family. In terms of assembly, homodimer.

It catalyses the reaction shikimate + NADP(+) = 3-dehydroshikimate + NADPH + H(+). It functions in the pathway metabolic intermediate biosynthesis; chorismate biosynthesis; chorismate from D-erythrose 4-phosphate and phosphoenolpyruvate: step 4/7. Its function is as follows. Involved in the biosynthesis of the chorismate, which leads to the biosynthesis of aromatic amino acids. Catalyzes the reversible NADPH linked reduction of 3-dehydroshikimate (DHSA) to yield shikimate (SA). The protein is Shikimate dehydrogenase (NADP(+)) of Anaeromyxobacter sp. (strain Fw109-5).